The sequence spans 301 residues: Putative two-component membrane permease complex subunit SMU_747c (301 aa).

The next 8 membrane-spanning stretches (helical) occupy residues 15–35 (LAIF…GAIL), 60–80 (ILFG…IVPI), 97–117 (FLAT…SAFG), 124–144 (FLRL…LGFI), 188–208 (YLIF…TRIL), 211–231 (IGHN…ILSL), 238–258 (FIGT…FLLI), and 278–298 (FILQ…LIVG).

It belongs to the UPF0718 family. Interacts with SMU_746c.

The protein localises to the cell membrane. Could be part of a two-component membrane permease system responsible for amino acid transport under low pH. Involved in acidogenesis, biofilm formation and low-pH survival. The sequence is that of Putative two-component membrane permease complex subunit SMU_747c from Streptococcus mutans serotype c (strain ATCC 700610 / UA159).